The following is a 196-amino-acid chain: Protein TEX261 (196 aa).

The next 5 membrane-spanning stretches (helical) occupy residues 3–23 (FMYVLSWLSLFIQVAFITLAV), 42–62 (SRIIKYMIWFSTAVLIGLYVF), 70–90 (IGVGLFTNLVYFGLLQTFPFI), 97–117 (FILSCGLVVVNHYLAFQFFAE), and 125–145 (VLAYFTFCLWIIPFAFFVSLS).

Belongs to the SVP26 family. In terms of tissue distribution, detected in testis.

It is found in the membrane. This Mus musculus (Mouse) protein is Protein TEX261 (Tex261).